We begin with the raw amino-acid sequence, 614 residues long: MKKQWKKIVLFVLPVIITLITLSSFLFYNQDVVHNWSSSRMTYGRFLEYIDMNWVKKVDLYDNARTAIVDIINPDIKGEEQLVRVELPTFSSELVSKLKNKLIDFDAHPSSSNVNLVSWLSNLLLPLILIITLFFFFRRGNKSSSGPGQAFNFGKAKARFHMEAKTGIVFEDVAGIEEAKEELQEIVAFLKDSRKFTNVGATIPKGVLLVGPPGTGKTLLAKAIAGEASAPFFSISGSEFVEMFVGVGASRVRDLFKKAKEKAPCIVFIDEIDAVGRQRGVGIGGGNDEREQTLNQLLTEMDGFSGDTGVIVVAATNRIDVLDSALLRPGRFDRQIMVSLPNINGRLAILKVHSKKKKIHKDVLLEVIARRTPGFSGADLANLLNEAAILTVRRGKVEITMKEIEDSIDKIIAGLEGSPLADSRIKRLIAYHEAGHAVAATFLPHHDPVQKVTLIPRRQAKGLTWFLPNDDQFLVSKSQILSKIIAALAGRAMEEIVFGLPEVTIGAANDIKQVTFMARQMVTKFGMSKVGPICLENSSSEVFIGRDLMGRHELSEEMVAKVDLEVRSILKDCYIQARTILSQNRKLIDRVVNELVEKETIEAKEFMRIVEERV.

Residues 1–7 are Stromal-facing; the sequence is MKKQWKK. Residues 8-28 form a helical membrane-spanning segment; it reads IVLFVLPVIITLITLSSFLFY. Residues 29-116 are Lumenal-facing; that stretch reads NQDVVHNWSS…AHPSSSNVNL (88 aa). Residues 117 to 137 form a helical membrane-spanning segment; the sequence is VSWLSNLLLPLILIITLFFFF. The Stromal segment spans residues 138 to 614; it reads RRGNKSSSGP…EFMRIVEERV (477 aa). Residue 211-218 coordinates ATP; sequence GPPGTGKT. Zn(2+) is bound at residue His-432. Glu-433 is an active-site residue. Zn(2+) contacts are provided by His-436 and Asp-510.

It in the central section; belongs to the AAA ATPase family. In the C-terminal section; belongs to the peptidase M41 family. Homohexamer. Zn(2+) serves as cofactor.

It localises to the plastid. It is found in the chloroplast thylakoid membrane. Acts as a processive, ATP-dependent zinc metallopeptidase. The protein is ATP-dependent zinc metalloprotease FtsH of Cyanidium caldarium (Red alga).